The following is a 299-amino-acid chain: GTPase Era (299 aa).

Residues 5–172 (KSGFVSIIGR…IDVLKTYLPE (168 aa)) enclose the Era-type G domain. The segment at 13 to 20 (GRPNVGKS) is G1. 13 to 20 (GRPNVGKS) is a GTP binding site. The tract at residues 39 to 43 (QTTRN) is G2. The interval 60–63 (DTPG) is G3. Residues 60 to 64 (DTPGI) and 122 to 125 (NKID) each bind GTP. A G4 region spans residues 122–125 (NKID). The segment at 151–153 (ISA) is G5. The KH type-2 domain occupies 203-280 (TSEEIPHAIG…YLELWVKVQR (78 aa)).

Belongs to the TRAFAC class TrmE-Era-EngA-EngB-Septin-like GTPase superfamily. Era GTPase family. In terms of assembly, monomer.

The protein localises to the cytoplasm. Its subcellular location is the cell membrane. An essential GTPase that binds both GDP and GTP, with rapid nucleotide exchange. Plays a role in 16S rRNA processing and 30S ribosomal subunit biogenesis and possibly also in cell cycle regulation and energy metabolism. The chain is GTPase Era from Staphylococcus aureus (strain Mu3 / ATCC 700698).